The primary structure comprises 266 residues: UPF0294 protein YafD (266 aa).

The protein belongs to the UPF0294 family.

The protein localises to the cytoplasm. This chain is UPF0294 protein YafD, found in Salmonella typhi.